Here is a 164-residue protein sequence, read N- to C-terminus: Gastrin-releasing peptide (164 aa).

Residues 1-27 (MGGGGPRRPGTLPLLALLALLAAHGGA) form the signal peptide. At Met-54 the chain carries Methionine amide. The propeptide occupies 58 to 164 (STGDFPYAYE…YQLCPTSALS (107 aa)).

This sequence belongs to the bombesin/neuromedin-B/ranatensin family.

It localises to the secreted. The protein resides in the cytoplasmic vesicle. Its subcellular location is the secretory vesicle lumen. In terms of biological role, stimulates the release of gastrin and other gastrointestinal hormones. Stimulates pancreatic protein and fluid secretion, and increases acid secretion from the avian proventriculus. In Gallus gallus (Chicken), this protein is Gastrin-releasing peptide (GRP).